A 148-amino-acid polypeptide reads, in one-letter code: Nucleoside diphosphate kinase (148 aa).

Residues lysine 10, phenylalanine 58, arginine 86, threonine 92, arginine 103, and asparagine 113 each contribute to the ATP site. The active-site Pros-phosphohistidine intermediate is histidine 116.

This sequence belongs to the NDK family. It depends on Mg(2+) as a cofactor.

It localises to the cytoplasm. It carries out the reaction a 2'-deoxyribonucleoside 5'-diphosphate + ATP = a 2'-deoxyribonucleoside 5'-triphosphate + ADP. The enzyme catalyses a ribonucleoside 5'-diphosphate + ATP = a ribonucleoside 5'-triphosphate + ADP. Functionally, major role in the synthesis of nucleoside triphosphates other than ATP. The ATP gamma phosphate is transferred to the NDP beta phosphate via a ping-pong mechanism, using a phosphorylated active-site intermediate. The protein is Nucleoside diphosphate kinase of Thermoplasma acidophilum (strain ATCC 25905 / DSM 1728 / JCM 9062 / NBRC 15155 / AMRC-C165).